The following is a 54-amino-acid chain: ATP synthase F(0) complex subunit 8 (54 aa).

The helical transmembrane segment at 9–25 (WVFLFFLVWLVLGFLGL) threads the bilayer.

Belongs to the ATPase protein 8 family. In terms of assembly, component of the ATP synthase complex composed at least of ATP5F1A/subunit alpha, ATP5F1B/subunit beta, ATP5MC1/subunit c (homooctomer), MT-ATP6/subunit a, MT-ATP8/subunit 8, ATP5ME/subunit e, ATP5MF/subunit f, ATP5MG/subunit g, ATP5MK/subunit k, ATP5MJ/subunit j, ATP5F1C/subunit gamma, ATP5F1D/subunit delta, ATP5F1E/subunit epsilon, ATP5PF/subunit F6, ATP5PB/subunit b, ATP5PD/subunit d, ATP5PO/subunit OSCP. ATP synthase complex consists of a soluble F(1) head domain (subunits alpha(3) and beta(3)) - the catalytic core - and a membrane F(0) domain - the membrane proton channel (subunits c, a, 8, e, f, g, k and j). These two domains are linked by a central stalk (subunits gamma, delta, and epsilon) rotating inside the F1 region and a stationary peripheral stalk (subunits F6, b, d, and OSCP).

Its subcellular location is the mitochondrion membrane. Its function is as follows. Subunit 8, of the mitochondrial membrane ATP synthase complex (F(1)F(0) ATP synthase or Complex V) that produces ATP from ADP in the presence of a proton gradient across the membrane which is generated by electron transport complexes of the respiratory chain. ATP synthase complex consist of a soluble F(1) head domain - the catalytic core - and a membrane F(1) domain - the membrane proton channel. These two domains are linked by a central stalk rotating inside the F(1) region and a stationary peripheral stalk. During catalysis, ATP synthesis in the catalytic domain of F(1) is coupled via a rotary mechanism of the central stalk subunits to proton translocation. In vivo, can only synthesize ATP although its ATP hydrolase activity can be activated artificially in vitro. Part of the complex F(0) domain. In Branchiostoma lanceolatum (Common lancelet), this protein is ATP synthase F(0) complex subunit 8.